The sequence spans 410 residues: Serine hydroxymethyltransferase (410 aa).

(6S)-5,6,7,8-tetrahydrofolate is bound by residues leucine 116 and 120-122; that span reads GHL. Lysine 225 is subject to N6-(pyridoxal phosphate)lysine. Residue 349–351 coordinates (6S)-5,6,7,8-tetrahydrofolate; sequence SPF.

It belongs to the SHMT family. Homodimer. It depends on pyridoxal 5'-phosphate as a cofactor.

It is found in the cytoplasm. The catalysed reaction is (6R)-5,10-methylene-5,6,7,8-tetrahydrofolate + glycine + H2O = (6S)-5,6,7,8-tetrahydrofolate + L-serine. It functions in the pathway one-carbon metabolism; tetrahydrofolate interconversion. Its pathway is amino-acid biosynthesis; glycine biosynthesis; glycine from L-serine: step 1/1. In terms of biological role, catalyzes the reversible interconversion of serine and glycine with tetrahydrofolate (THF) serving as the one-carbon carrier. This reaction serves as the major source of one-carbon groups required for the biosynthesis of purines, thymidylate, methionine, and other important biomolecules. Also exhibits THF-independent aldolase activity toward beta-hydroxyamino acids, producing glycine and aldehydes, via a retro-aldol mechanism. This Leuconostoc citreum (strain KM20) protein is Serine hydroxymethyltransferase.